A 436-amino-acid polypeptide reads, in one-letter code: 3-ketoacyl-CoA thiolase (436 aa).

The Acyl-thioester intermediate role is filled by cysteine 99. Active-site proton acceptor residues include histidine 392 and cysteine 422.

Belongs to the thiolase-like superfamily. Thiolase family. As to quaternary structure, heterotetramer of two alpha chains (FadJ) and two beta chains (FadI).

The protein localises to the cytoplasm. The enzyme catalyses an acyl-CoA + acetyl-CoA = a 3-oxoacyl-CoA + CoA. The protein operates within lipid metabolism; fatty acid beta-oxidation. Catalyzes the final step of fatty acid oxidation in which acetyl-CoA is released and the CoA ester of a fatty acid two carbons shorter is formed. This chain is 3-ketoacyl-CoA thiolase, found in Escherichia coli O7:K1 (strain IAI39 / ExPEC).